The following is a 102-amino-acid chain: Large ribosomal subunit protein bL21 (102 aa).

It belongs to the bacterial ribosomal protein bL21 family. Part of the 50S ribosomal subunit. Contacts protein L20.

Functionally, this protein binds to 23S rRNA in the presence of protein L20. In Exiguobacterium sp. (strain ATCC BAA-1283 / AT1b), this protein is Large ribosomal subunit protein bL21.